Here is a 436-residue protein sequence, read N- to C-terminus: 3-ketoacyl-CoA thiolase (436 aa).

Catalysis depends on Cys-99, which acts as the Acyl-thioester intermediate. Catalysis depends on proton acceptor residues His-392 and Cys-422.

This sequence belongs to the thiolase-like superfamily. Thiolase family. As to quaternary structure, heterotetramer of two alpha chains (FadJ) and two beta chains (FadI).

The protein resides in the cytoplasm. The catalysed reaction is an acyl-CoA + acetyl-CoA = a 3-oxoacyl-CoA + CoA. It participates in lipid metabolism; fatty acid beta-oxidation. Its function is as follows. Catalyzes the final step of fatty acid oxidation in which acetyl-CoA is released and the CoA ester of a fatty acid two carbons shorter is formed. The sequence is that of 3-ketoacyl-CoA thiolase from Citrobacter koseri (strain ATCC BAA-895 / CDC 4225-83 / SGSC4696).